The primary structure comprises 517 residues: Steroid 17-alpha-hydroxylase/17,20 lyase (517 aa).

Cys451 contacts heme.

The protein belongs to the cytochrome P450 family. Heme serves as cofactor.

The protein resides in the membrane. It catalyses the reaction a C21-steroid + reduced [NADPH--hemoprotein reductase] + O2 = a 17alpha-hydroxy-C21-steroid + oxidized [NADPH--hemoprotein reductase] + H2O + H(+). The catalysed reaction is 17alpha-hydroxyprogesterone + reduced [NADPH--hemoprotein reductase] + O2 = androst-4-ene-3,17-dione + acetate + oxidized [NADPH--hemoprotein reductase] + H2O + 2 H(+). The enzyme catalyses 17alpha-hydroxypregnenolone + reduced [NADPH--hemoprotein reductase] + O2 = 3beta-hydroxyandrost-5-en-17-one + acetate + oxidized [NADPH--hemoprotein reductase] + H2O + 2 H(+). Its pathway is lipid metabolism; steroid biosynthesis. Functionally, conversion of pregnenolone and progesterone to their 17-alpha-hydroxylated products and subsequently to dehydroepiandrosterone (DHEA) and androstenedione. Catalyzes both the 17-alpha-hydroxylation and the 17,20-lyase reaction. The chain is Steroid 17-alpha-hydroxylase/17,20 lyase (cyp17a1) from Oryzias latipes (Japanese rice fish).